The chain runs to 144 residues: Superoxide dismutase [Mn] 1 (144 aa).

Positions 42, 124, and 128 each coordinate Mn(2+).

The protein belongs to the iron/manganese superoxide dismutase family. The cofactor is Mn(2+).

It carries out the reaction 2 superoxide + 2 H(+) = H2O2 + O2. In terms of biological role, destroys superoxide anion radicals which are normally produced within the cells and which are toxic to biological systems. The polypeptide is Superoxide dismutase [Mn] 1 (sod1) (Haloferax mediterranei (Halobacterium mediterranei)).